A 458-amino-acid chain; its full sequence is Translation initiation factor eIF2B subunit gamma (458 aa).

A Phosphoserine modification is found at serine 291.

The protein belongs to the eIF-2B gamma/epsilon subunits family. As to quaternary structure, component of the translation initiation factor 2B (eIF2B) complex which is a heterodecamer of two sets of five different subunits: alpha, beta, gamma, delta and epsilon. Subunits alpha, beta and delta comprise a regulatory subcomplex and subunits epsilon and gamma comprise a catalytic subcomplex. Within the complex, the hexameric regulatory complex resides at the center, with the two heterodimeric catalytic subcomplexes bound on opposite sides.

Its subcellular location is the cytoplasm. It localises to the cytosol. Its function is as follows. Acts as a component of the translation initiation factor 2B (eIF2B) complex, which catalyzes the exchange of GDP for GTP on the eukaryotic initiation factor 2 (eIF2) complex gamma subunit. Its guanine nucleotide exchange factor activity is repressed when bound to eIF2 complex phosphorylated on the alpha subunit, thereby limiting the amount of methionyl-initiator methionine tRNA available to the ribosome and consequently global translation is repressed. This chain is Translation initiation factor eIF2B subunit gamma (tif223), found in Schizosaccharomyces pombe (strain 972 / ATCC 24843) (Fission yeast).